The chain runs to 452 residues: 2-succinylbenzoate--CoA ligase (452 aa).

The protein belongs to the ATP-dependent AMP-binding enzyme family. MenE subfamily.

It catalyses the reaction 2-succinylbenzoate + ATP + CoA = 2-succinylbenzoyl-CoA + AMP + diphosphate. It functions in the pathway quinol/quinone metabolism; 1,4-dihydroxy-2-naphthoate biosynthesis; 1,4-dihydroxy-2-naphthoate from chorismate: step 5/7. It participates in quinol/quinone metabolism; menaquinone biosynthesis. Functionally, converts 2-succinylbenzoate (OSB) to 2-succinylbenzoyl-CoA (OSB-CoA). In Haemophilus influenzae (strain ATCC 51907 / DSM 11121 / KW20 / Rd), this protein is 2-succinylbenzoate--CoA ligase.